The primary structure comprises 295 residues: Pyridoxal 5'-phosphate synthase subunit PdxS (295 aa).

Residue Asp25 participates in D-ribose 5-phosphate binding. Lys82 acts as the Schiff-base intermediate with D-ribose 5-phosphate in catalysis. Position 154 (Gly154) interacts with D-ribose 5-phosphate. Arg166 is a binding site for D-glyceraldehyde 3-phosphate. Residues Gly215 and 236-237 (GS) each bind D-ribose 5-phosphate.

The protein belongs to the PdxS/SNZ family. In the presence of PdxT, forms a dodecamer of heterodimers.

It carries out the reaction aldehydo-D-ribose 5-phosphate + D-glyceraldehyde 3-phosphate + L-glutamine = pyridoxal 5'-phosphate + L-glutamate + phosphate + 3 H2O + H(+). Its pathway is cofactor biosynthesis; pyridoxal 5'-phosphate biosynthesis. Catalyzes the formation of pyridoxal 5'-phosphate from ribose 5-phosphate (RBP), glyceraldehyde 3-phosphate (G3P) and ammonia. The ammonia is provided by the PdxT subunit. Can also use ribulose 5-phosphate and dihydroxyacetone phosphate as substrates, resulting from enzyme-catalyzed isomerization of RBP and G3P, respectively. This Actinobacillus pleuropneumoniae serotype 7 (strain AP76) protein is Pyridoxal 5'-phosphate synthase subunit PdxS.